Reading from the N-terminus, the 328-residue chain is Phosphate acyltransferase (328 aa).

This sequence belongs to the PlsX family. In terms of assembly, homodimer. Probably interacts with PlsY.

The protein localises to the cytoplasm. The catalysed reaction is a fatty acyl-[ACP] + phosphate = an acyl phosphate + holo-[ACP]. Its pathway is lipid metabolism; phospholipid metabolism. Functionally, catalyzes the reversible formation of acyl-phosphate (acyl-PO(4)) from acyl-[acyl-carrier-protein] (acyl-ACP). This enzyme utilizes acyl-ACP as fatty acyl donor, but not acyl-CoA. The chain is Phosphate acyltransferase from Staphylococcus aureus (strain MRSA252).